Consider the following 337-residue polypeptide: Phenylpyruvate C(3)-methyltransferase (337 aa).

Belongs to the methyltransferase superfamily.

The enzyme catalyses 3-phenylpyruvate + S-adenosyl-L-methionine = (3S)-2-oxo-3-phenylbutanoate + S-adenosyl-L-homocysteine + H(+). Its pathway is antibiotic biosynthesis. Functionally, S-adenosyl-L-methionine-dependent methyltransferase involved in synthesis of the nonproteinogenic amino acid (2S,3S)-beta-methyl-phenylalanine, a building block of the antibiotic mannopeptimycin. The chain is Phenylpyruvate C(3)-methyltransferase (mppJ) from Streptomyces hygroscopicus.